Reading from the N-terminus, the 393-residue chain is NAD(P)H-quinone oxidoreductase subunit H, chloroplastic (393 aa).

The protein belongs to the complex I 49 kDa subunit family. In terms of assembly, NDH is composed of at least 16 different subunits, 5 of which are encoded in the nucleus.

It is found in the plastid. The protein resides in the chloroplast thylakoid membrane. The enzyme catalyses a plastoquinone + NADH + (n+1) H(+)(in) = a plastoquinol + NAD(+) + n H(+)(out). The catalysed reaction is a plastoquinone + NADPH + (n+1) H(+)(in) = a plastoquinol + NADP(+) + n H(+)(out). Its function is as follows. NDH shuttles electrons from NAD(P)H:plastoquinone, via FMN and iron-sulfur (Fe-S) centers, to quinones in the photosynthetic chain and possibly in a chloroplast respiratory chain. The immediate electron acceptor for the enzyme in this species is believed to be plastoquinone. Couples the redox reaction to proton translocation, and thus conserves the redox energy in a proton gradient. This Psilotum nudum (Whisk fern) protein is NAD(P)H-quinone oxidoreductase subunit H, chloroplastic.